Here is a 39-residue protein sequence, read N- to C-terminus: Photosystem II reaction center protein I (39 aa).

Residues 6-26 traverse the membrane as a helical segment; sequence ISVYSVVFFFIGIFMFGFLAS.

This sequence belongs to the PsbI family. As to quaternary structure, PSII is composed of 1 copy each of membrane proteins PsbA, PsbB, PsbC, PsbD, PsbE, PsbF, PsbH, PsbI, PsbJ, PsbK, PsbL, PsbM, PsbT, PsbX, PsbY, PsbZ, Psb30/Ycf12, peripheral proteins PsbO, CyanoQ (PsbQ), PsbU, PsbV and a large number of cofactors. It forms dimeric complexes.

Its subcellular location is the cellular thylakoid membrane. One of the components of the core complex of photosystem II (PSII), required for its stability and/or assembly. PSII is a light-driven water:plastoquinone oxidoreductase that uses light energy to abstract electrons from H(2)O, generating O(2) and a proton gradient subsequently used for ATP formation. It consists of a core antenna complex that captures photons, and an electron transfer chain that converts photonic excitation into a charge separation. This is Photosystem II reaction center protein I from Synechococcus sp. (strain RCC307).